Reading from the N-terminus, the 498-residue chain is Glycerol kinase (498 aa).

Position 12 (Thr12) interacts with ADP. Residues Thr12, Thr13, and Ser14 each contribute to the ATP site. Thr12 lines the sn-glycerol 3-phosphate pocket. Arg16 is a binding site for ADP. Sn-glycerol 3-phosphate is bound by residues Arg82, Glu83, Tyr135, and Asp245. Glycerol-binding residues include Arg82, Glu83, Tyr135, Asp245, and Gln246. ADP-binding residues include Thr267 and Gly310. The ATP site is built by Thr267, Gly310, Gln314, and Gly411. Residues Gly411 and Asn415 each contribute to the ADP site.

The protein belongs to the FGGY kinase family. As to quaternary structure, homotetramer and homodimer (in equilibrium).

It catalyses the reaction glycerol + ATP = sn-glycerol 3-phosphate + ADP + H(+). It participates in polyol metabolism; glycerol degradation via glycerol kinase pathway; sn-glycerol 3-phosphate from glycerol: step 1/1. With respect to regulation, activated by phosphorylation and inhibited by fructose 1,6-bisphosphate (FBP). Its function is as follows. Key enzyme in the regulation of glycerol uptake and metabolism. Catalyzes the phosphorylation of glycerol to yield sn-glycerol 3-phosphate. The protein is Glycerol kinase of Clostridium botulinum (strain Alaska E43 / Type E3).